Here is a 98-residue protein sequence, read N- to C-terminus: Cytochrome c-552 (98 aa).

A signal peptide spans 1–18 (MKKFLLVAVVGLAGITFA). Cys-28, Cys-31, His-32, and Met-77 together coordinate heme c.

Belongs to the cytochrome c family. Binds 1 heme c group covalently per subunit.

Its function is as follows. Reacts with hydrogenase. The polypeptide is Cytochrome c-552 (Hydrogenobacter thermophilus (strain DSM 6534 / IAM 12695 / TK-6)).